A 36-amino-acid polypeptide reads, in one-letter code: Photosystem I reaction center subunit VIII (36 aa).

Residues 8-28 (SIFVPLVGLVFPAIAIASLFL) form a helical membrane-spanning segment.

This sequence belongs to the PsaI family.

It is found in the plastid. It localises to the chloroplast thylakoid membrane. Functionally, may help in the organization of the PsaL subunit. The polypeptide is Photosystem I reaction center subunit VIII (Jasminum nudiflorum (Winter jasmine)).